The sequence spans 480 residues: UDP-N-acetylmuramate--L-alanine ligase (480 aa).

122-128 (GTHGKTT) is a binding site for ATP.

The protein belongs to the MurCDEF family.

It localises to the cytoplasm. The enzyme catalyses UDP-N-acetyl-alpha-D-muramate + L-alanine + ATP = UDP-N-acetyl-alpha-D-muramoyl-L-alanine + ADP + phosphate + H(+). The protein operates within cell wall biogenesis; peptidoglycan biosynthesis. In terms of biological role, cell wall formation. This Pseudomonas aeruginosa (strain LESB58) protein is UDP-N-acetylmuramate--L-alanine ligase.